The following is a 561-amino-acid chain: ATP-dependent rRNA helicase RRP3 (561 aa).

Composition is skewed to low complexity over residues 1–23 (MPKA…SSNS) and 30–45 (ASSP…PSTS). The segment at 1-109 (MPKASASSAK…DEKKVATIAD (109 aa)) is disordered. Positions 100 to 109 (DEKKVATIAD) are enriched in basic and acidic residues. Residues 114–142 (VEFSDLGVIPQIVEACTNMGFKHPTPIQV) carry the Q motif motif. The 172-residue stretch at 145–316 (IPEALQARDV…RASLKNPVRV (172 aa)) folds into the Helicase ATP-binding domain. 158–165 (AQTGSGKT) provides a ligand contact to ATP. A DEAD box motif is present at residues 264–267 (DEAD). One can recognise a Helicase C-terminal domain in the interval 339–487 (HKDTYLVHLA…EFPGGNDKEA (149 aa)). Positions 506–561 (LKDKGVGSAGGSGKRKRKMDGKYGDDMDRDDDQVQAGLPVSGNGRHQNQNRKKGRR) are disordered.

It belongs to the DEAD box helicase family. DDX47/RRP3 subfamily. In terms of assembly, interacts with the SSU processome.

It localises to the nucleus. The catalysed reaction is ATP + H2O = ADP + phosphate + H(+). Functionally, ATP-dependent rRNA helicase required for pre-ribosomal RNA processing. Involved in the maturation of the 35S-pre-rRNA and to its cleavage to mature 18S rRNA. In Mycosarcoma maydis (Corn smut fungus), this protein is ATP-dependent rRNA helicase RRP3.